The sequence spans 213 residues: ATP-dependent dethiobiotin synthetase BioD (213 aa).

12–17 contributes to the ATP binding site; the sequence is EVGKTY. Position 16 (Thr-16) interacts with Mg(2+). Residue Lys-37 is part of the active site. ATP contacts are provided by residues Asp-46, 107–110, and 167–168; these read EGVG and NN. Residues Asp-46 and Glu-107 each contribute to the Mg(2+) site.

Belongs to the dethiobiotin synthetase family. Homodimer. The cofactor is Mg(2+).

It localises to the cytoplasm. It carries out the reaction (7R,8S)-7,8-diammoniononanoate + CO2 + ATP = (4R,5S)-dethiobiotin + ADP + phosphate + 3 H(+). It functions in the pathway cofactor biosynthesis; biotin biosynthesis; biotin from 7,8-diaminononanoate: step 1/2. In terms of biological role, catalyzes a mechanistically unusual reaction, the ATP-dependent insertion of CO2 between the N7 and N8 nitrogen atoms of 7,8-diaminopelargonic acid (DAPA, also called 7,8-diammoniononanoate) to form a ureido ring. This chain is ATP-dependent dethiobiotin synthetase BioD, found in Akkermansia muciniphila (strain ATCC BAA-835 / DSM 22959 / JCM 33894 / BCRC 81048 / CCUG 64013 / CIP 107961 / Muc).